The chain runs to 218 residues: Peptide methionine sulfoxide reductase A2 (218 aa).

The segment covering 1–19 has biased composition (polar residues); it reads MDSSLKTQEPQVVETSPSP. Residues 1–30 form a disordered region; that stretch reads MDSSLKTQEPQVVETSPSPVAQEPPQVADK. At Ser205 the chain carries Phosphoserine.

It belongs to the MsrA Met sulfoxide reductase family.

It localises to the cytoplasm. It is found in the cytosol. It carries out the reaction L-methionyl-[protein] + [thioredoxin]-disulfide + H2O = L-methionyl-(S)-S-oxide-[protein] + [thioredoxin]-dithiol. The enzyme catalyses [thioredoxin]-disulfide + L-methionine + H2O = L-methionine (S)-S-oxide + [thioredoxin]-dithiol. With respect to regulation, activated during dark in short day conditions. Catalyzes the reduction of methionine sulfoxide (MetSO) to methionine in proteins. Plays a protective role against oxidative stress by restoring activity to proteins that have been inactivated by methionine oxidation. Prevents cellular oxidative damage in long nights. MSRA family specifically reduces the MetSO S-enantiomer. This is Peptide methionine sulfoxide reductase A2 (MRSA2) from Arabidopsis thaliana (Mouse-ear cress).